The following is a 124-amino-acid chain: Histone H2A (124 aa).

The segment covering 1 to 18 has biased composition (basic residues); that stretch reads MSGRGKSGKARTKAKSRS. The disordered stretch occupies residues 1–21; it reads MSGRGKSGKARTKAKSRSSRA. S2 is subject to N-acetylserine. Position 2 is a phosphoserine (S2). N5-methylglutamine is present on Q104. K119 participates in a covalent cross-link: Glycyl lysine isopeptide (Lys-Gly) (interchain with G-Cter in ubiquitin).

It belongs to the histone H2A family. As to quaternary structure, the nucleosome is a histone octamer containing two molecules each of H2A, H2B, H3 and H4 assembled in one H3-H4 heterotetramer and two H2A-H2B heterodimers. The octamer wraps approximately 147 bp of DNA. Monoubiquitination of Lys-119 gives a specific tag for epigenetic transcriptional repression. Post-translationally, phosphorylation of Ser-2 directly represses transcription.

The protein resides in the nucleus. Its subcellular location is the chromosome. In terms of biological role, core component of nucleosome. Nucleosomes wrap and compact DNA into chromatin, limiting DNA accessibility to the cellular machineries which require DNA as a template. Histones thereby play a central role in transcription regulation, DNA repair, DNA replication and chromosomal stability. DNA accessibility is regulated via a complex set of post-translational modifications of histones, also called histone code, and nucleosome remodeling. The polypeptide is Histone H2A (Paracentrotus lividus (Common sea urchin)).